The sequence spans 620 residues: Mitochondrial Rho GTPase 2 (620 aa).

Over 1-594 (MRRDVRILLL…ELHPTSFWLR (594 aa)) the chain is Cytoplasmic. In terms of domain architecture, Miro 1 spans 2–168 (RRDVRILLLG…FYYAQKAVLH (167 aa)). GTP contacts are provided by G16, K17, T18, and S19. T18 is a Mg(2+) binding site. D57 is a binding site for Mg(2+). S59 is a GTP binding site. K96 participates in a covalent cross-link: Glycyl lysine isopeptide (Lys-Gly) (interchain with G-Cter in ubiquitin). Positions 118, 119, 121, 149, and 150 each coordinate GTP. K119 is covalently cross-linked (Glycyl lysine isopeptide (Lys-Gly) (interchain with G-Cter in ubiquitin)). K164 participates in a covalent cross-link: Glycyl lysine isopeptide (Lys-Gly) (interchain with G-Cter in ubiquitin). EF-hand domains lie at 184 to 219 (ACAQ…CFGH) and 304 to 339 (RGYQ…FSGA). Positions 197, 199, 201, 208, 317, 319, 321, and 328 each coordinate Ca(2+). Residues 415–578 (RSVLMCKVLG…FTQLATMATF (164 aa)) form the Miro 2 domain. Residues G427, G429, K430, S431, and A432 each coordinate GTP. Residue S431 coordinates Mg(2+). E473 serves as a coordination point for Mg(2+). K527, D529, and C558 together coordinate GTP. The helical; Anchor for type IV membrane protein transmembrane segment at 595 to 617 (GVLVAVGTAVAAVLSFSLYRVLV) threads the bilayer. Residues 618 to 620 (KSR) are Mitochondrial intermembrane-facing.

The protein belongs to the mitochondrial Rho GTPase family. As to quaternary structure, homodimer. Interacts with the kinesin-binding proteins TRAK1/OIP106 and TRAK2/GRIF1, forming a link between mitochondria and the trafficking apparatus of the microtubules. Interacts with ARMCX3. Found in a complex with KIF5B, OGT, RHOT1 and TRAK1. Post-translationally, ubiquitinated by PRKN in a PINK1-dependent manner, leading to its degradation. As to expression, ubiquitously expressed.

It localises to the mitochondrion outer membrane. The enzyme catalyses GTP + H2O = GDP + phosphate + H(+). It carries out the reaction ATP + H2O = ADP + phosphate + H(+). The catalysed reaction is UTP + H2O = UDP + phosphate + H(+). In terms of biological role, atypical mitochondrial nucleoside-triphosphatase (NTPase) involved in mitochondrial trafficking. Probably involved in control of anterograde transport of mitochondria and their subcellular distribution. Can hydrolyze GTP, ATP and UTP. The protein is Mitochondrial Rho GTPase 2 (Rhot2) of Mus musculus (Mouse).